The following is a 148-amino-acid chain: Glutamyl-tRNA(Gln) amidotransferase subunit C, mitochondrial (148 aa).

Residues M1 to Y10 constitute a mitochondrion transit peptide.

The protein belongs to the GatC family. Subunit of the heterotrimeric GatCAB amidotransferase (AdT) complex, composed of A, B and C subunits.

It localises to the mitochondrion. The catalysed reaction is L-glutamyl-tRNA(Gln) + L-glutamine + ATP + H2O = L-glutaminyl-tRNA(Gln) + L-glutamate + ADP + phosphate + H(+). Its function is as follows. Allows the formation of correctly charged Gln-tRNA(Gln) through the transamidation of misacylated Glu-tRNA(Gln) in the mitochondria. The reaction takes place in the presence of glutamine and ATP through an activated gamma-phospho-Glu-tRNA(Gln). The polypeptide is Glutamyl-tRNA(Gln) amidotransferase subunit C, mitochondrial (Drosophila ananassae (Fruit fly)).